A 477-amino-acid polypeptide reads, in one-letter code: UDP-N-acetylmuramoylalanine--D-glutamate ligase (477 aa).

125–131 (GTNGKST) is a binding site for ATP.

Belongs to the MurCDEF family.

Its subcellular location is the cytoplasm. It catalyses the reaction UDP-N-acetyl-alpha-D-muramoyl-L-alanine + D-glutamate + ATP = UDP-N-acetyl-alpha-D-muramoyl-L-alanyl-D-glutamate + ADP + phosphate + H(+). The protein operates within cell wall biogenesis; peptidoglycan biosynthesis. Functionally, cell wall formation. Catalyzes the addition of glutamate to the nucleotide precursor UDP-N-acetylmuramoyl-L-alanine (UMA). The protein is UDP-N-acetylmuramoylalanine--D-glutamate ligase of Rhodospirillum rubrum (strain ATCC 11170 / ATH 1.1.1 / DSM 467 / LMG 4362 / NCIMB 8255 / S1).